A 115-amino-acid chain; its full sequence is uncharacterized protein (115 aa).

This is an uncharacterized protein from Saccharomyces cerevisiae (strain ATCC 204508 / S288c) (Baker's yeast).